A 106-amino-acid polypeptide reads, in one-letter code: U1-lycotoxin-Ls1b (106 aa).

The N-terminal stretch at 1 to 19 (MKVLVVVALLVTLISYSSS) is a signal peptide. Residues 20–40 (EGIDDLEADELLSLMANEQTR) constitute a propeptide that is removed on maturation. 4 disulfide bridges follow: C43–C58, C50–C67, C57–C85, and C69–C83.

This sequence belongs to the neurotoxin 19 (CSTX) family. 04 (U1-Lctx) subfamily. In terms of tissue distribution, expressed by the venom gland.

Its subcellular location is the secreted. The protein is U1-lycotoxin-Ls1b of Lycosa singoriensis (Wolf spider).